We begin with the raw amino-acid sequence, 158 residues long: Transcription elongation factor GreA (158 aa).

This sequence belongs to the GreA/GreB family.

Functionally, necessary for efficient RNA polymerase transcription elongation past template-encoded arresting sites. The arresting sites in DNA have the property of trapping a certain fraction of elongating RNA polymerases that pass through, resulting in locked ternary complexes. Cleavage of the nascent transcript by cleavage factors such as GreA or GreB allows the resumption of elongation from the new 3'terminus. GreA releases sequences of 2 to 3 nucleotides. The sequence is that of Transcription elongation factor GreA from Bacillus licheniformis (strain ATCC 14580 / DSM 13 / JCM 2505 / CCUG 7422 / NBRC 12200 / NCIMB 9375 / NCTC 10341 / NRRL NRS-1264 / Gibson 46).